A 176-amino-acid polypeptide reads, in one-letter code: Small ribosomal subunit protein uS8c (176 aa).

This sequence belongs to the universal ribosomal protein uS8 family. As to quaternary structure, part of the 30S ribosomal subunit.

It localises to the plastid. The protein localises to the chloroplast. Functionally, one of the primary rRNA binding proteins, it binds directly to 16S rRNA central domain where it helps coordinate assembly of the platform of the 30S subunit. This Stigeoclonium helveticum (Green alga) protein is Small ribosomal subunit protein uS8c (rps8).